The following is a 483-amino-acid chain: SET domain and MYND-type zinc finger protein 6 (483 aa).

Positions P4–I228 constitute an SET domain. Positions 49, 52, 62, 65, 71, 75, 83, and 87 each coordinate Zn(2+). Residues C49 to C87 form an MYND-type zinc finger.

It belongs to the class V-like SAM-binding methyltransferase superfamily.

It localises to the cytoplasm. The protein resides in the nucleus. This chain is SET domain and MYND-type zinc finger protein 6 (set6), found in Schizosaccharomyces pombe (strain 972 / ATCC 24843) (Fission yeast).